The primary structure comprises 480 residues: NADH-quinone oxidoreductase subunit N (480 aa).

A run of 13 helical transmembrane segments spans residues 10–30 (FISIGPLLIVLMTALIIILIE), 40–60 (WSSLISIGGLTLSIFAVWGGI), 80–100 (FFTVFFLVIGIGASLLATAFF), 117–137 (AVFGLILIGAAADLLTLFLGI), 166–186 (LMGSIVAGFLLYGIALVYGAI), 208–228 (VLFFSGIAMITLGLAFKAALV), 246–266 (TAFMAVGTKVGVFAAFVRLFF), 276–296 (WNQVIDTLVYATLIYANFVAL), 304–324 (FFAYSSISHAGFLMIPVVIGN), 330–350 (ALTFYLVIYAIATFGCFAVLA), 374–394 (LASLLSICLLTLAGIPPTAGF), 409–431 (YYGLVIVGLLTTILSSYYYLRII), and 452–472 (IVGTTSFIAIIILSFYPAPFL).

This sequence belongs to the complex I subunit 2 family. NDH-1 is composed of 14 different subunits. Subunits NuoA, H, J, K, L, M, N constitute the membrane sector of the complex.

It localises to the cell inner membrane. It catalyses the reaction a quinone + NADH + 5 H(+)(in) = a quinol + NAD(+) + 4 H(+)(out). In terms of biological role, NDH-1 shuttles electrons from NADH, via FMN and iron-sulfur (Fe-S) centers, to quinones in the respiratory chain. The immediate electron acceptor for the enzyme in this species is believed to be ubiquinone. Couples the redox reaction to proton translocation (for every two electrons transferred, four hydrogen ions are translocated across the cytoplasmic membrane), and thus conserves the redox energy in a proton gradient. In Protochlamydia amoebophila (strain UWE25), this protein is NADH-quinone oxidoreductase subunit N.